The sequence spans 348 residues: MKLDDRKQKVLLAIVHDYIATAEPVGSRTIAKKYKLGVSPATIRNEMADLEEMGYIEQPHTSAGRIPSERGYRYYVDYLMKRQELSREEEELIRREYEAKVRDVGQVIQKTGQLLSQLTNYTAVVLSPQIESSRFKYIQLVSMHPSQAMVIVVMDNGIVHNRMIEVPESITCADMETISRVLNAKLRGLTMESIRLTLMKEIYFELARHKHILDLAMELIQDSLLHKVEDKIYLGGVFNMLNQPEFHDVEKVKTLLGILEQEKLLRDLITSGGSEEGVTVRIGGEIMHEDIRECSMVTAPYSVCGRKIGSLGVLGPTRMEYAKVVSVVDFMTKNLSQVLERIVRGTGR.

This sequence belongs to the HrcA family.

Functionally, negative regulator of class I heat shock genes (grpE-dnaK-dnaJ and groELS operons). Prevents heat-shock induction of these operons. This chain is Heat-inducible transcription repressor HrcA, found in Pelotomaculum thermopropionicum (strain DSM 13744 / JCM 10971 / SI).